A 493-amino-acid polypeptide reads, in one-letter code: Glutamyl-tRNA(Gln) amidotransferase subunit A (493 aa).

Catalysis depends on charge relay system residues Lys78 and Ser158. Ser182 functions as the Acyl-ester intermediate in the catalytic mechanism.

Belongs to the amidase family. GatA subfamily. Heterotrimer of A, B and C subunits.

The catalysed reaction is L-glutamyl-tRNA(Gln) + L-glutamine + ATP + H2O = L-glutaminyl-tRNA(Gln) + L-glutamate + ADP + phosphate + H(+). Its function is as follows. Allows the formation of correctly charged Gln-tRNA(Gln) through the transamidation of misacylated Glu-tRNA(Gln) in organisms which lack glutaminyl-tRNA synthetase. The reaction takes place in the presence of glutamine and ATP through an activated gamma-phospho-Glu-tRNA(Gln). The protein is Glutamyl-tRNA(Gln) amidotransferase subunit A of Rickettsia typhi (strain ATCC VR-144 / Wilmington).